The chain runs to 158 residues: NAD(P)H-quinone oxidoreductase subunit J, chloroplastic (158 aa).

It belongs to the complex I 30 kDa subunit family. NDH is composed of at least 16 different subunits, 5 of which are encoded in the nucleus.

It localises to the plastid. Its subcellular location is the chloroplast thylakoid membrane. The catalysed reaction is a plastoquinone + NADH + (n+1) H(+)(in) = a plastoquinol + NAD(+) + n H(+)(out). The enzyme catalyses a plastoquinone + NADPH + (n+1) H(+)(in) = a plastoquinol + NADP(+) + n H(+)(out). In terms of biological role, NDH shuttles electrons from NAD(P)H:plastoquinone, via FMN and iron-sulfur (Fe-S) centers, to quinones in the photosynthetic chain and possibly in a chloroplast respiratory chain. The immediate electron acceptor for the enzyme in this species is believed to be plastoquinone. Couples the redox reaction to proton translocation, and thus conserves the redox energy in a proton gradient. This is NAD(P)H-quinone oxidoreductase subunit J, chloroplastic from Nandina domestica (Heavenly bamboo).